The sequence spans 59 residues: Small, acid-soluble spore protein H 1 (59 aa).

Belongs to the SspH family.

The protein localises to the spore core. This is Small, acid-soluble spore protein H 1 (sspH1) from Bacillus anthracis.